A 268-amino-acid polypeptide reads, in one-letter code: Protein CONTINUOUS VASCULAR RING 1 (268 aa).

Residues 1–70 (MGDEKPVIVM…GWASKKFMTG (70 aa)) lie on the Cytoplasmic side of the membrane. The segment at 21–48 (IPVADSGDKDDGSSSKPSSSSSASSSSH) is disordered. The span at 34-48 (SSKPSSSSSASSSSH) shows a compositional bias: low complexity. A helical membrane pass occupies residues 71–91 (CVILLPIAITFYITWWFIHFV). At 92–103 (DGFFSPIYAQLG) the chain is on the extracellular side. Residues 104-124 (INVFGFGFLTSIAFIFLVGVF) traverse the membrane as a helical segment. Over 125–268 (MSSWLGASVL…LASIDRATSL (144 aa)) the chain is Cytoplasmic.

It belongs to the plant COV1 protein family. As to expression, mostly expressed in flowers and stems, and, to a lower extent, in roots and leaves.

The protein localises to the membrane. In terms of biological role, involved in the regulation of vascular patterning in the stem, probably by negatively regulating the differentiation of vascular tissue. This is Protein CONTINUOUS VASCULAR RING 1 from Arabidopsis thaliana (Mouse-ear cress).